A 140-amino-acid polypeptide reads, in one-letter code: Small ribosomal subunit protein uS12m (140 aa).

A mitochondrion-targeting transit peptide spans 1–30 (MNFLRQSFGITKQLASQAIQCSYETAVRGM).

This sequence belongs to the universal ribosomal protein uS12 family.

The protein localises to the mitochondrion. The polypeptide is Small ribosomal subunit protein uS12m (tko) (Drosophila melanogaster (Fruit fly)).